The chain runs to 79 residues: Submaxillary gland androgen-regulated protein 3B (79 aa).

Positions 1–22 (MKSLTWILGLWALAACFTPGES) are cleaved as a signal peptide. Residues 19–79 (PGESQRGPRG…GIFPPPPPQP (61 aa)) are disordered. The residue at position 23 (Q23) is a Pyrrolidone carboxylic acid. The span at 28–79 (GPYPPGPLAPPQPFGPGFVPPPPPPPYGPGRIPPPPPAPYGPGIFPPPPPQP) shows a compositional bias: pro residues.

This sequence belongs to the PROL1/PROL3 family. P-A and D1A are probably degradation products of P-B. As to expression, secreted into saliva by submaxillary gland. Not expressed in heart, brain, lung, liver, skeletal muscle, Kidney, pancreas or placenta.

It is found in the secreted. The chain is Submaxillary gland androgen-regulated protein 3B (SMR3B) from Homo sapiens (Human).